Here is a 194-residue protein sequence, read N- to C-terminus: HTH-type transcriptional regulator BetI (194 aa).

The 61-residue stretch at 8-68 (EIRRAQLIDA…ATMRHVLRDL (61 aa)) folds into the HTH tetR-type domain. Residues 31–50 (TLASVAQRANISTGIVSHYF) constitute a DNA-binding region (H-T-H motif).

The protein operates within amine and polyamine biosynthesis; betaine biosynthesis via choline pathway [regulation]. Functionally, repressor involved in the biosynthesis of the osmoprotectant glycine betaine. It represses transcription of the choline transporter BetT and the genes of BetAB involved in the synthesis of glycine betaine. The polypeptide is HTH-type transcriptional regulator BetI (Burkholderia ambifaria (strain MC40-6)).